The primary structure comprises 696 residues: DNA-directed RNA polymerase subunit beta' (696 aa).

Zn(2+) is bound by residues cysteine 76, cysteine 78, cysteine 94, and cysteine 97. The Mg(2+) site is built by aspartate 496, aspartate 498, and aspartate 500.

It belongs to the RNA polymerase beta' chain family. RpoC1 subfamily. In terms of assembly, in plastids the minimal PEP RNA polymerase catalytic core is composed of four subunits: alpha, beta, beta', and beta''. When a (nuclear-encoded) sigma factor is associated with the core the holoenzyme is formed, which can initiate transcription. The cofactor is Mg(2+). It depends on Zn(2+) as a cofactor.

The protein localises to the plastid. Its subcellular location is the chloroplast. It catalyses the reaction RNA(n) + a ribonucleoside 5'-triphosphate = RNA(n+1) + diphosphate. In terms of biological role, DNA-dependent RNA polymerase catalyzes the transcription of DNA into RNA using the four ribonucleoside triphosphates as substrates. This Guizotia abyssinica (Niger) protein is DNA-directed RNA polymerase subunit beta'.